A 96-amino-acid polypeptide reads, in one-letter code: Aspartyl/glutamyl-tRNA(Asn/Gln) amidotransferase subunit C (96 aa).

The protein belongs to the GatC family. In terms of assembly, heterotrimer of A, B and C subunits.

It carries out the reaction L-glutamyl-tRNA(Gln) + L-glutamine + ATP + H2O = L-glutaminyl-tRNA(Gln) + L-glutamate + ADP + phosphate + H(+). The catalysed reaction is L-aspartyl-tRNA(Asn) + L-glutamine + ATP + H2O = L-asparaginyl-tRNA(Asn) + L-glutamate + ADP + phosphate + 2 H(+). Its function is as follows. Allows the formation of correctly charged Asn-tRNA(Asn) or Gln-tRNA(Gln) through the transamidation of misacylated Asp-tRNA(Asn) or Glu-tRNA(Gln) in organisms which lack either or both of asparaginyl-tRNA or glutaminyl-tRNA synthetases. The reaction takes place in the presence of glutamine and ATP through an activated phospho-Asp-tRNA(Asn) or phospho-Glu-tRNA(Gln). The protein is Aspartyl/glutamyl-tRNA(Asn/Gln) amidotransferase subunit C of Oceanobacillus iheyensis (strain DSM 14371 / CIP 107618 / JCM 11309 / KCTC 3954 / HTE831).